The primary structure comprises 355 residues: Phosphoribosylformylglycinamidine cyclo-ligase (355 aa).

Belongs to the AIR synthase family.

Its subcellular location is the cytoplasm. It catalyses the reaction 2-formamido-N(1)-(5-O-phospho-beta-D-ribosyl)acetamidine + ATP = 5-amino-1-(5-phospho-beta-D-ribosyl)imidazole + ADP + phosphate + H(+). It functions in the pathway purine metabolism; IMP biosynthesis via de novo pathway; 5-amino-1-(5-phospho-D-ribosyl)imidazole from N(2)-formyl-N(1)-(5-phospho-D-ribosyl)glycinamide: step 2/2. The chain is Phosphoribosylformylglycinamidine cyclo-ligase from Paraburkholderia xenovorans (strain LB400).